The primary structure comprises 522 residues: Lysine--tRNA ligase (522 aa).

The 'HIGH' region signature appears at 44–52 (PSGLPHIGT). The 'KMSKS' region motif lies at 290–294 (KISKS). K293 provides a ligand contact to ATP.

It belongs to the class-I aminoacyl-tRNA synthetase family.

It is found in the cytoplasm. It carries out the reaction tRNA(Lys) + L-lysine + ATP = L-lysyl-tRNA(Lys) + AMP + diphosphate. The chain is Lysine--tRNA ligase from Rickettsia conorii (strain ATCC VR-613 / Malish 7).